The sequence spans 307 residues: Ribonuclease Z (307 aa).

Positions 63, 65, 67, 68, 141, 212, and 270 each coordinate Zn(2+). D67 acts as the Proton acceptor in catalysis.

Belongs to the RNase Z family. Homodimer. It depends on Zn(2+) as a cofactor.

It catalyses the reaction Endonucleolytic cleavage of RNA, removing extra 3' nucleotides from tRNA precursor, generating 3' termini of tRNAs. A 3'-hydroxy group is left at the tRNA terminus and a 5'-phosphoryl group is left at the trailer molecule.. Zinc phosphodiesterase, which displays some tRNA 3'-processing endonuclease activity. Probably involved in tRNA maturation, by removing a 3'-trailer from precursor tRNA. The sequence is that of Ribonuclease Z from Bacillus anthracis (strain A0248).